The following is a 255-amino-acid chain: Ribonuclease HII (255 aa).

One can recognise an RNase H type-2 domain in the interval 72–255 (AIICGIDEVG…KSFEPIKSLL (184 aa)). The a divalent metal cation site is built by D78, E79, and D170.

Belongs to the RNase HII family. Mn(2+) serves as cofactor. Requires Mg(2+) as cofactor.

Its subcellular location is the cytoplasm. It carries out the reaction Endonucleolytic cleavage to 5'-phosphomonoester.. Its function is as follows. Endonuclease that specifically degrades the RNA of RNA-DNA hybrids. The polypeptide is Ribonuclease HII (Staphylococcus aureus (strain Mu3 / ATCC 700698)).